Consider the following 977-residue polypeptide: uncharacterized protein (977 aa).

Residues 1 to 24 (MQSNLLKVLGVLAIVATLVCFIFA) form the signal peptide. Residues 125–146 (TESTRPGKSNLDDKGNMIPIPR) form a disordered region. The next 6 membrane-spanning stretches (helical) occupy residues 612-632 (IKAI…LGFA), 722-742 (LGLS…IVII), 754-774 (AFMA…FLLF), 796-816 (VVMM…LDFV), 833-853 (FIGT…INWF), and 866-886 (GVNM…YGYV). The tract at residues 918–977 (KALSPIGMDDKTRQGITGRAEARLKQRNKTLDQAEKNRKNTPKEGGEKTNAEPPQPEARG) is disordered. The segment covering 937-967 (AEARLKQRNKTLDQAEKNRKNTPKEGGEKTN) has biased composition (basic and acidic residues).

Belongs to the TrbL/VirB6 family.

It is found in the cell membrane. This is an uncharacterized protein from Rickettsia felis (strain ATCC VR-1525 / URRWXCal2) (Rickettsia azadi).